The chain runs to 287 residues: Large ribosomal subunit protein uL2 (287 aa).

The tract at residues Arg221 to Ser287 is disordered. Residues Lys258–Ser287 are compositionally biased toward basic residues.

The protein belongs to the universal ribosomal protein uL2 family. As to quaternary structure, part of the 50S ribosomal subunit. Forms a bridge to the 30S subunit in the 70S ribosome.

In terms of biological role, one of the primary rRNA binding proteins. Required for association of the 30S and 50S subunits to form the 70S ribosome, for tRNA binding and peptide bond formation. It has been suggested to have peptidyltransferase activity; this is somewhat controversial. Makes several contacts with the 16S rRNA in the 70S ribosome. This is Large ribosomal subunit protein uL2 from Synechococcus sp. (strain WH7803).